The sequence spans 465 residues: Cysteine--tRNA ligase (465 aa).

Cys-30 contacts Zn(2+). Residues 32–42 (ITVYDYCHVGH) carry the 'HIGH' region motif. Zn(2+) contacts are provided by Cys-214, His-239, and Glu-243. Positions 271 to 275 (KMSKS) match the 'KMSKS' region motif. An ATP-binding site is contributed by Lys-274.

It belongs to the class-I aminoacyl-tRNA synthetase family. In terms of assembly, monomer. It depends on Zn(2+) as a cofactor.

The protein resides in the cytoplasm. It carries out the reaction tRNA(Cys) + L-cysteine + ATP = L-cysteinyl-tRNA(Cys) + AMP + diphosphate. In Burkholderia vietnamiensis (strain G4 / LMG 22486) (Burkholderia cepacia (strain R1808)), this protein is Cysteine--tRNA ligase.